Consider the following 311-residue polypeptide: Putative RNA-binding protein R05D3.8 (311 aa).

One can recognise an RRM domain in the interval 155-235 (KRLFVSYFPL…RRAVLKESVK (81 aa)). Residues 261 to 270 (TPSRPVTSVH) are compositionally biased toward polar residues. Positions 261 to 311 (TPSRPVTSVHASSSASSNHYDPSAAAGYAPLYHQPPESDPLSQCGYGPRKW) are disordered.

This is Putative RNA-binding protein R05D3.8 from Caenorhabditis elegans.